The chain runs to 345 residues: N-acetyl-gamma-glutamyl-phosphate reductase (345 aa).

Cys153 is an active-site residue.

This sequence belongs to the NAGSA dehydrogenase family. Type 1 subfamily.

Its subcellular location is the cytoplasm. It catalyses the reaction N-acetyl-L-glutamate 5-semialdehyde + phosphate + NADP(+) = N-acetyl-L-glutamyl 5-phosphate + NADPH + H(+). The protein operates within amino-acid biosynthesis; L-arginine biosynthesis; N(2)-acetyl-L-ornithine from L-glutamate: step 3/4. In terms of biological role, catalyzes the NADPH-dependent reduction of N-acetyl-5-glutamyl phosphate to yield N-acetyl-L-glutamate 5-semialdehyde. The sequence is that of N-acetyl-gamma-glutamyl-phosphate reductase from Methylacidiphilum infernorum (isolate V4) (Methylokorus infernorum (strain V4)).